Reading from the N-terminus, the 483-residue chain is Membrane-bound lytic murein transglycosylase F (483 aa).

The N-terminal stretch at 1–18 (MKGLVIRISVALALLLWA) is a signal peptide. A non-LT domain region spans residues 19–270 (VDMVFPWQQI…RIEEKYFSHI (252 aa)). The tract at residues 272 to 483 (QFDYVDIKSY…IMITPQNSQD (212 aa)) is LT domain. E315 is a catalytic residue.

In the N-terminal section; belongs to the bacterial solute-binding protein 3 family. The protein in the C-terminal section; belongs to the transglycosylase Slt family.

It localises to the cell outer membrane. It carries out the reaction Exolytic cleavage of the (1-&gt;4)-beta-glycosidic linkage between N-acetylmuramic acid (MurNAc) and N-acetylglucosamine (GlcNAc) residues in peptidoglycan, from either the reducing or the non-reducing ends of the peptidoglycan chains, with concomitant formation of a 1,6-anhydrobond in the MurNAc residue.. Murein-degrading enzyme that degrades murein glycan strands and insoluble, high-molecular weight murein sacculi, with the concomitant formation of a 1,6-anhydromuramoyl product. Lytic transglycosylases (LTs) play an integral role in the metabolism of the peptidoglycan (PG) sacculus. Their lytic action creates space within the PG sacculus to allow for its expansion as well as for the insertion of various structures such as secretion systems and flagella. This Actinobacillus succinogenes (strain ATCC 55618 / DSM 22257 / CCUG 43843 / 130Z) protein is Membrane-bound lytic murein transglycosylase F.